The sequence spans 260 residues: Large ribosomal subunit protein eL8A (260 aa).

A disordered region spans residues 1–34; the sequence is MPSSKKVAPAPLATKSKASTSTKNPLFESTPKNF.

The protein belongs to the eukaryotic ribosomal protein eL8 family. As to quaternary structure, component of the large ribosomal subunit. Mature ribosomes consist of a small (40S) and a large (60S) subunit. The 40S subunit contains about 32 different proteins and 1 molecule of RNA (18S). The 60S subunit contains 45 different proteins and 3 molecules of RNA (25S, 5.8S and 5S).

It localises to the cytoplasm. Component of the ribosome, a large ribonucleoprotein complex responsible for the synthesis of proteins in the cell. The small ribosomal subunit (SSU) binds messenger RNAs (mRNAs) and translates the encoded message by selecting cognate aminoacyl-transfer RNA (tRNA) molecules. The large subunit (LSU) contains the ribosomal catalytic site termed the peptidyl transferase center (PTC), which catalyzes the formation of peptide bonds, thereby polymerizing the amino acids delivered by tRNAs into a polypeptide chain. The nascent polypeptides leave the ribosome through a tunnel in the LSU and interact with protein factors that function in enzymatic processing, targeting, and the membrane insertion of nascent chains at the exit of the ribosomal tunnel. The sequence is that of Large ribosomal subunit protein eL8A from Candida albicans (strain SC5314 / ATCC MYA-2876) (Yeast).